The primary structure comprises 147 residues: MPPTREELVSTALNFIAQFAKLDVDSVLSFLSPNCTLRSFPSSLGKPALQTKEESKADFQGLKDFFQNFQLRVKDGSEPVVDEPARRVVLHIEGKGDSLVGRFETEYIYILRMNEEGTMVEDFFQFADSATRDAWGKKIEAHFSARN.

It belongs to the trt14 isomerase family. As to quaternary structure, homodimer.

The protein operates within secondary metabolite biosynthesis; terpenoid biosynthesis. In terms of biological role, part of the gene cluster that mediates the biosynthesis of calidodehydroaustin, a fungal meroterpenoid. The first step of the pathway is the synthesis of 3,5-dimethylorsellinic acid by the polyketide synthase ausA. 3,5-dimethylorsellinic acid is then prenylated by the polyprenyl transferase ausN. Further epoxidation by the FAD-dependent monooxygenase ausM and cyclization by the probable terpene cyclase ausL lead to the formation of protoaustinoid A. Protoaustinoid A is then oxidized to spiro-lactone preaustinoid A3 by the combined action of the FAD-binding monooxygenases ausB and ausC, and the dioxygenase ausE. Acid-catalyzed keto-rearrangement and ring contraction of the tetraketide portion of preaustinoid A3 by ausJ lead to the formation of preaustinoid A4. The aldo-keto reductase ausK, with the help of ausH, is involved in the next step by transforming preaustinoid A4 into isoaustinone which is in turn hydroxylated by the P450 monooxygenase ausI to form austinolide. The cytochrome P450 monooxygenase ausG modifies austinolide to austinol. Austinol is further acetylated to austin by the O-acetyltransferase ausP, which spontaneously changes to dehydroaustin. The cytochrome P450 monooxygenase ausR then converts dehydroaustin is into 7-dehydrodehydroaustin. The hydroxylation catalyzed by ausR permits the O-acetyltransferase ausQ to add an additional acetyl group to the molecule, leading to the formation of acetoxydehydroaustin. The short chain dehydrogenase ausT catalyzes the reduction of the double bond present between carbon atoms 1 and 2 to convert 7-dehydrodehydroaustin into 1,2-dihydro-7-hydroxydehydroaustin. AusQ catalyzes not only an acetylation reaction but also the addition of the PKS ausV diketide product to 1,2-dihydro-7-hydroxydehydroaustin, forming precalidodehydroaustin. Finally, the iron/alpha-ketoglutarate-dependent dioxygenase converts precalidodehydroaustin into calidodehydroaustin. The protein is Austinoid biosynthesis cluster protein H of Aspergillus calidoustus.